The sequence spans 430 residues: CC-adding tRNA nucleotidyltransferase (430 aa).

33–36 (GCVR) is a binding site for CTP. Positions 46 and 48 each coordinate Mg(2+). CTP contacts are provided by residues 108–109 (RD), N113, 150–159 (DPLRIVRAYR), and R190.

Belongs to the tRNA nucleotidyltransferase/poly(A) polymerase family. Requires Mg(2+) as cofactor.

It catalyses the reaction a tRNA precursor + 2 CTP = a tRNA with a 3' CC end + 2 diphosphate. Functionally, tRNA nucleotidyltransferase involved in the synthesis of the tRNA CCA terminus. Adds the two cytidine residues to tRNA. The chain is CC-adding tRNA nucleotidyltransferase from Geobacter sulfurreducens (strain ATCC 51573 / DSM 12127 / PCA).